We begin with the raw amino-acid sequence, 346 residues long: Anthranilate phosphoribosyltransferase (346 aa).

5-phospho-alpha-D-ribose 1-diphosphate is bound by residues glycine 88, 91–92 (GD), threonine 96, 98–101 (NIST), 116–124 (KHGNRAVSS), and alanine 128. Glycine 88 provides a ligand contact to anthranilate. Serine 100 serves as a coordination point for Mg(2+). An anthranilate-binding site is contributed by asparagine 119. Anthranilate is bound at residue arginine 174. Mg(2+)-binding residues include aspartate 233 and glutamate 234.

Belongs to the anthranilate phosphoribosyltransferase family. Homodimer. Mg(2+) is required as a cofactor.

The catalysed reaction is N-(5-phospho-beta-D-ribosyl)anthranilate + diphosphate = 5-phospho-alpha-D-ribose 1-diphosphate + anthranilate. The protein operates within amino-acid biosynthesis; L-tryptophan biosynthesis; L-tryptophan from chorismate: step 2/5. Its function is as follows. Catalyzes the transfer of the phosphoribosyl group of 5-phosphorylribose-1-pyrophosphate (PRPP) to anthranilate to yield N-(5'-phosphoribosyl)-anthranilate (PRA). This Paramagnetospirillum magneticum (strain ATCC 700264 / AMB-1) (Magnetospirillum magneticum) protein is Anthranilate phosphoribosyltransferase.